Consider the following 561-residue polypeptide: Putative transport protein YbjL (561 aa).

The next 5 helical transmembrane spans lie at 8–28, 32–52, 66–86, 94–114, and 158–178; these read LLNG…LCLG, LGSI…LLGQ, FMLF…SIFF, MLAL…GKLF, and NLSL…IVGA. RCK C-terminal domains follow at residues 200–288 and 292–373; these read RGLD…SFRN and VFDR…RIGF. The next 5 membrane-spanning stretches (helical) occupy residues 383-403, 406-426, 451-471, 475-495, and 540-560; these read LLAF…TFQF, FSFG…LGFM, VFMA…LGAI, MLIA…LFGA, and AIAN…WPGL.

This sequence belongs to the AAE transporter (TC 2.A.81) family. YbjL subfamily.

Its subcellular location is the cell membrane. This is Putative transport protein YbjL from Shigella sonnei (strain Ss046).